The following is a 334-amino-acid chain: Ornithine carbamoyltransferase, catabolic (334 aa).

Carbamoyl phosphate is bound by residues 57-60 (STRT), glutamine 84, arginine 108, and 135-138 (HPTQ). Residues asparagine 168, aspartate 232, and 236 to 237 (SM) each bind L-ornithine. Carbamoyl phosphate-binding positions include 274-275 (CL) and arginine 321.

It belongs to the aspartate/ornithine carbamoyltransferase superfamily. OTCase family.

It is found in the cytoplasm. It catalyses the reaction carbamoyl phosphate + L-ornithine = L-citrulline + phosphate + H(+). It functions in the pathway amino-acid degradation; L-arginine degradation via ADI pathway; carbamoyl phosphate from L-arginine: step 2/2. Functionally, reversibly catalyzes the transfer of the carbamoyl group from carbamoyl phosphate (CP) to the N(epsilon) atom of ornithine (ORN) to produce L-citrulline. This chain is Ornithine carbamoyltransferase, catabolic (arcB), found in Avibacterium paragallinarum (Haemophilus gallinarum).